A 347-amino-acid polypeptide reads, in one-letter code: NADH-ubiquinone oxidoreductase chain 2 (347 aa).

10 consecutive transmembrane segments (helical) span residues 3–23 (PLIF…TMIS), 26–46 (WLLI…IIMM), 67–87 (SMLL…WTIM), 96–116 (YMMT…FWVP), 149–169 (LNLN…GWGG), 178–198 (IMAY…MYNT), 200–220 (LMML…ALFI), 239–259 (ILTT…PLSG), 274–294 (NMLL…YFYM), and 325–345 (LSPT…MMLI).

The protein belongs to the complex I subunit 2 family. Core subunit of respiratory chain NADH dehydrogenase (Complex I) which is composed of 45 different subunits. Interacts with TMEM242.

It is found in the mitochondrion inner membrane. It catalyses the reaction a ubiquinone + NADH + 5 H(+)(in) = a ubiquinol + NAD(+) + 4 H(+)(out). Its function is as follows. Core subunit of the mitochondrial membrane respiratory chain NADH dehydrogenase (Complex I) which catalyzes electron transfer from NADH through the respiratory chain, using ubiquinone as an electron acceptor. Essential for the catalytic activity and assembly of complex I. The chain is NADH-ubiquinone oxidoreductase chain 2 from Dasypus novemcinctus (Nine-banded armadillo).